Here is a 329-residue protein sequence, read N- to C-terminus: DNA-directed RNA polymerase subunit alpha (329 aa).

The tract at residues 1–235 (MQGSVTEFLK…EQLEAFVDLR (235 aa)) is alpha N-terminal domain (alpha-NTD). The tract at residues 249–329 (FDPILLRPVD…NWPPASIADE (81 aa)) is alpha C-terminal domain (alpha-CTD).

This sequence belongs to the RNA polymerase alpha chain family. As to quaternary structure, homodimer. The RNAP catalytic core consists of 2 alpha, 1 beta, 1 beta' and 1 omega subunit. When a sigma factor is associated with the core the holoenzyme is formed, which can initiate transcription.

The catalysed reaction is RNA(n) + a ribonucleoside 5'-triphosphate = RNA(n+1) + diphosphate. Functionally, DNA-dependent RNA polymerase catalyzes the transcription of DNA into RNA using the four ribonucleoside triphosphates as substrates. The protein is DNA-directed RNA polymerase subunit alpha of Enterobacter sp. (strain 638).